The sequence spans 328 residues: Glyoxylate reductase/hydroxypyruvate reductase (328 aa).

Ser36 is modified (phosphoserine). Residue Val83–Gly84 coordinates substrate. NADP(+) is bound by residues Gly162 to Ile164, Arg185 to Arg188, Ser217, and Ile243. Positions 245 and 269 each coordinate substrate. Ser272 carries the post-translational modification Phosphoserine. His293 acts as the Proton donor in catalysis. Substrate is bound at residue His293–Ser296. Gly295 serves as a coordination point for NADP(+). Thr298 bears the Phosphothreonine mark.

It belongs to the D-isomer specific 2-hydroxyacid dehydrogenase family. Homodimer. As to expression, ubiquitous. Most abundantly expressed in the liver.

The catalysed reaction is glycolate + NADP(+) = glyoxylate + NADPH + H(+). The enzyme catalyses (R)-glycerate + NAD(+) = 3-hydroxypyruvate + NADH + H(+). It catalyses the reaction (R)-glycerate + NADP(+) = 3-hydroxypyruvate + NADPH + H(+). Its function is as follows. Enzyme with hydroxy-pyruvate reductase, glyoxylate reductase and D-glycerate dehydrogenase enzymatic activities. Reduces hydroxypyruvate to D-glycerate, glyoxylate to glycolate, oxidizes D-glycerate to hydroxypyruvate. This Homo sapiens (Human) protein is Glyoxylate reductase/hydroxypyruvate reductase (GRHPR).